The chain runs to 318 residues: Beta-ketoacyl-[acyl-carrier-protein] synthase III (318 aa).

Active-site residues include Cys113 and His245. The tract at residues 246–250 is ACP-binding; that stretch reads QANIR. Residue Asn275 is part of the active site.

The protein belongs to the thiolase-like superfamily. FabH family. In terms of assembly, homodimer.

It localises to the cytoplasm. The enzyme catalyses malonyl-[ACP] + acetyl-CoA + H(+) = 3-oxobutanoyl-[ACP] + CO2 + CoA. The protein operates within lipid metabolism; fatty acid biosynthesis. Its function is as follows. Catalyzes the condensation reaction of fatty acid synthesis by the addition to an acyl acceptor of two carbons from malonyl-ACP. Catalyzes the first condensation reaction which initiates fatty acid synthesis and may therefore play a role in governing the total rate of fatty acid production. Possesses both acetoacetyl-ACP synthase and acetyl transacylase activities. Its substrate specificity determines the biosynthesis of branched-chain and/or straight-chain of fatty acids. The protein is Beta-ketoacyl-[acyl-carrier-protein] synthase III of Wolbachia pipientis subsp. Culex pipiens (strain wPip).